Consider the following 204-residue polypeptide: Pro-hevein (204 aa).

The N-terminal stretch at 1–17 (MNIFIVVLLCLTGVAIA) is a signal peptide. The region spanning 18–60 (EQCGRQAGGKLCPNNLCCSQWGWCGSTDEYCSPDHNCQSNCKD) is the Chitin-binding type-1 domain. Disulfide bonds link Cys-20/Cys-35, Cys-29/Cys-41, Cys-34/Cys-48, and Cys-54/Cys-58. Residues 61-66 (SGEGVG) constitute a propeptide that is removed on maturation. The region spanning 68-189 (GSASNVLATY…VNYQFVDCGD (122 aa)) is the Barwin domain. Cystine bridges form between Cys-96-Cys-128, Cys-117-Cys-151, and Cys-131-Cys-187.

In terms of processing, proteolytically processed to yield the two chains of the mature protein. Laticifer.

N-acetyl-D-glucosamine / N-acetyl-D-neuraminic acid binding lectin. Can inhibit fungal growth. This Hevea brasiliensis (Para rubber tree) protein is Pro-hevein (HEV1).